Reading from the N-terminus, the 91-residue chain is MSFDRQQVPAWRPGYRFQYEPAQKGHVLLYPEGMIKLNDSAGLIGGLIDGQRSVAAIIDELQQQFPGVPEVADDIEQFMEVARAEHWITLA.

It belongs to the PqqD family. In terms of assembly, monomer. Interacts with PqqE.

It participates in cofactor biosynthesis; pyrroloquinoline quinone biosynthesis. Functionally, functions as a PqqA binding protein and presents PqqA to PqqE, in the pyrroloquinoline quinone (PQQ) biosynthetic pathway. This is PqqA binding protein from Pseudomonas entomophila (strain L48).